Reading from the N-terminus, the 199-residue chain is ATP-dependent Clp protease proteolytic subunit (199 aa).

Serine 97 serves as the catalytic Nucleophile. Histidine 122 is a catalytic residue.

Belongs to the peptidase S14 family. Fourteen ClpP subunits assemble into 2 heptameric rings which stack back to back to give a disk-like structure with a central cavity, resembling the structure of eukaryotic proteasomes.

The protein localises to the cytoplasm. The catalysed reaction is Hydrolysis of proteins to small peptides in the presence of ATP and magnesium. alpha-casein is the usual test substrate. In the absence of ATP, only oligopeptides shorter than five residues are hydrolyzed (such as succinyl-Leu-Tyr-|-NHMec, and Leu-Tyr-Leu-|-Tyr-Trp, in which cleavage of the -Tyr-|-Leu- and -Tyr-|-Trp bonds also occurs).. In terms of biological role, cleaves peptides in various proteins in a process that requires ATP hydrolysis. Has a chymotrypsin-like activity. Plays a major role in the degradation of misfolded proteins. The polypeptide is ATP-dependent Clp protease proteolytic subunit (Geotalea daltonii (strain DSM 22248 / JCM 15807 / FRC-32) (Geobacter daltonii)).